Consider the following 379-residue polypeptide: Dihydroflavonol 4-reductase (379 aa).

NADP(+)-binding residues include K56 and Y175.

The protein belongs to the NAD(P)-dependent epimerase/dehydratase family. Dihydroflavonol-4-reductase subfamily. Expressed in both leaf and hypocotyl tissues.

It carries out the reaction a (2R,3S,4S)-leucoanthocyanidin + NADP(+) = a (2R,3R)-dihydroflavonol + NADPH + H(+). The enzyme catalyses (2S)-flavan-4-ol + NADP(+) = (2S)-flavanone + NADPH + H(+). It participates in pigment biosynthesis; anthocyanin biosynthesis. Bifunctional enzyme involved in flavonoid metabolism. In Solanum lycopersicum (Tomato), this protein is Dihydroflavonol 4-reductase.